Consider the following 435-residue polypeptide: Transforming growth factor beta-2 proprotein (435 aa).

The signal sequence occupies residues 1–20 (MHYCVLSAFLLLHLVTVALS). N72, N140, and N241 each carry an N-linked (GlcNAc...) asparagine glycan. Intrachain disulfides connect C309–C318, C317–C380, C346–C411, and C350–C413.

It belongs to the TGF-beta family. Interacts with the serine proteases, HTRA1 and HTRA3. Interacts with ASPN. Interacts with MFAP5. As to quaternary structure, interacts with Transforming growth factor beta-2 (TGF-beta-2) chain; interaction is non-covalent and maintains (TGF-beta-2) in a latent state. Interacts with LRRC32/GARP; leading to regulate activation of TGF-beta-2. Interacts with NREP; the interaction results in a decrease in TGFB2 autoinduction. In terms of assembly, transforming growth factor beta-2: Homodimer; disulfide-linked. Transforming growth factor beta-2: Interacts with TGF-beta receptors (TGFBR1 and TGFBR2), leading to signal transduction. The precursor proprotein is cleaved in the Golgi apparatus to form Transforming growth factor beta-2 (TGF-beta-2) and Latency-associated peptide (LAP) chains, which remain non-covalently linked, rendering TGF-beta-2 inactive.

Its subcellular location is the secreted. The protein localises to the extracellular space. The protein resides in the extracellular matrix. Precursor of the Latency-associated peptide (LAP) and Transforming growth factor beta-2 (TGF-beta-2) chains, which constitute the regulatory and active subunit of TGF-beta-2, respectively. Its function is as follows. Required to maintain the Transforming growth factor beta-2 (TGF-beta-2) chain in a latent state during storage in extracellular matrix. Associates non-covalently with TGF-beta-2 and regulates its activation via interaction with 'milieu molecules', such as LTBP1 and LRRC32/GARP, that control activation of TGF-beta-2. Functionally, multifunctional protein that regulates various processes such as angiogenesis and heart development. Activation into mature form follows different steps: following cleavage of the proprotein in the Golgi apparatus, Latency-associated peptide (LAP) and Transforming growth factor beta-2 (TGF-beta-2) chains remain non-covalently linked rendering TGF-beta-2 inactive during storage in extracellular matrix. At the same time, LAP chain interacts with 'milieu molecules', such as LTBP1 and LRRC32/GARP, that control activation of TGF-beta-2 and maintain it in a latent state during storage in extracellular milieus. Once activated following release of LAP, TGF-beta-2 acts by binding to TGF-beta receptors (TGFBR1 and TGFBR2), which transduce signal. The chain is Transforming growth factor beta-2 proprotein (TGFB2) from Sus scrofa (Pig).